The chain runs to 91 residues: UPF0298 protein M28_Spy0318 (91 aa).

This sequence belongs to the UPF0298 family.

It is found in the cytoplasm. The protein is UPF0298 protein M28_Spy0318 of Streptococcus pyogenes serotype M28 (strain MGAS6180).